The primary structure comprises 49 residues: uncharacterized protein (49 aa).

A helical transmembrane segment spans residues 5–27 (ILEILSAFIRILFKLLYCWALFF).

It localises to the membrane. This is an uncharacterized protein from Saccharomyces cerevisiae (strain ATCC 204508 / S288c) (Baker's yeast).